The primary structure comprises 417 residues: Phosphoribosylamine--glycine ligase (417 aa).

One can recognise an ATP-grasp domain in the interval 108–307 (KRIMDEAGVP…LSTLLFAAAT (200 aa)). An ATP-binding site is contributed by 134–188 (LDEFGAPYVVKADGLAAGKGVIVTEDRAAALAHAARYLTHGSVLVEEFLDGEEVS). Positions 277 and 279 each coordinate Mg(2+).

Belongs to the GARS family. Mg(2+) is required as a cofactor. The cofactor is Mn(2+).

It carries out the reaction 5-phospho-beta-D-ribosylamine + glycine + ATP = N(1)-(5-phospho-beta-D-ribosyl)glycinamide + ADP + phosphate + H(+). Its pathway is purine metabolism; IMP biosynthesis via de novo pathway; N(1)-(5-phospho-D-ribosyl)glycinamide from 5-phospho-alpha-D-ribose 1-diphosphate: step 2/2. This Leifsonia xyli subsp. xyli (strain CTCB07) protein is Phosphoribosylamine--glycine ligase.